A 1252-amino-acid chain; its full sequence is ABC transporter B family member 19 (1252 aa).

A glycan (N-linked (GlcNAc...) asparagine) is linked at Asn-5. Residues 41-330 (MFVGSLGAIV…SFSNLGAFSK (290 aa)) form the ABC transmembrane type-1 1 domain. Helical transmembrane passes span 42–62 (FVGS…FLLF) and 88–108 (LYFV…IACW). An ATP-binding site is contributed by Asp-136. 4 helical membrane-spanning segments follow: residues 163 to 183 (VGNF…GFVS), 187 to 207 (LALL…LYAY), 274 to 294 (CTYG…GVFI), and 308 to 328 (IFSA…LGAF). Residues Tyr-276 and Trp-283 each contribute to the brassinolide site. An ABC transporter 1 domain is found at 365-601 (IEFKDVTFSY…SGAYASLIRF (237 aa)). ATP-binding residues include Tyr-374, Ser-376, Gly-405, Lys-406, Ser-407, Thr-408, and Glu-529. Asn-641 carries N-linked (GlcNAc...) asparagine glycosylation. Positions 687–975 (SIMGAVGSIL…TVSLAPEIIR (289 aa)) constitute an ABC transmembrane type-1 2 domain. The next 2 membrane-spanning stretches (helical) occupy residues 688 to 708 (IMGA…AIVM) and 732 to 752 (FIYI…HYFF). Asn-758 is a glycosylation site (N-linked (GlcNAc...) asparagine). Asp-780 is a binding site for ATP. N-linked (GlcNAc...) asparagine glycosylation is found at Asn-785 and Asn-814. 3 helical membrane passes run 822–842 (FIVA…TFPL), 914–934 (GFLF…ILWY), and 949–969 (VIKV…TVSL). Residues 965 to 1252 (ETVSLAPEII…RLLQLQTHRI (288 aa)) are interaction with FKBP42/TWD1. Positions 1010 to 1246 (IEFRHVDFAY…PEGAYSRLLQ (237 aa)) constitute an ABC transporter 2 domain. ATP contacts are provided by Tyr-1019, Ser-1021, Arg-1022, Lys-1051, Ser-1052, and Ser-1053.

Belongs to the ABC transporter superfamily. ABCB family. Multidrug resistance exporter (TC 3.A.1.201) subfamily. In terms of assembly, interacts with 1-naphthylphthalamic acid (NPA), and FKBP42/TWD1. In terms of processing, phosphorylated by PHOT1 in phototropic seedlings, to modulates auxin export and distribution and regulates leaf and petiole curling. As to expression, ubiquitous, mostly in shoot meristems. Present in the majority of stem cells, predominantly in a non-polar manner. Accumulates in seedlings roots and hypocotyls, and in roots apices and inflorescences.

It is found in the cell membrane. It carries out the reaction (indol-3-yl)acetate(in) + ATP + H2O = (indol-3-yl)acetate(out) + ADP + phosphate + H(+). The catalysed reaction is brassinolide(in) + ATP + H2O = brassinolide(out) + ADP + phosphate + H(+). The enzyme catalyses 24-epi-brassinolide(in) + ATP + H2O = 24-epi-brassinolide(out) + ADP + phosphate + H(+). It catalyses the reaction 24-epi-castasterone(in) + ATP + H2O = 24-epi-castasterone(out) + ADP + phosphate + H(+). It carries out the reaction castasterone(in) + ATP + H2O = castasterone(out) + ADP + phosphate + H(+). With respect to regulation, transport capacity is stimulated by the chaperone protein FKBP42/TWD1. ATPase activity is specifically activated by bioactive brassinosteroids in a dose-dependent manner, including brassinolide (BL), 24-epiBL and 24-epicastasterone (24-epiCS). Inhibited by vanadate. In terms of biological role, brassinosteroid exporter that, in conjunction with ABCB1, supports the accumulation of exogenous brassinosteroids (BR) in the apoplast, thus promoting BR signaling initiation involving the specific receptor BRI1 and required for plant growth and stress responses. Mediates the transport of castasterone (CSA) and brassinolide (BL) across the plasma membrane. Auxin efflux transporter that acts as a negative regulator of light signaling to promote hypocotyl elongation by mediating leaf tip to petiole auxin flux. Required for the regulation of leaf position and morphology during PHOT1-mediated blue light responses involving auxin distribution, especially in low light fluence. Together with ABCB1 and in a FKBP42/TWD1-dependent manner, supports seed development by promoting stamen elongation and, to a lesser extent, anther dehiscence and pollen maturation, probably as auxin transporters. Contributes to the connective auxin transport (CAT) that ensures communication across the shoot system, including auxin loading at axillary bud apices to influence strigolactone-mediated bud outgrowth responses and shoot branching control. Mediates the accumulation of chlorophyll and anthocyanin, as well as the expression of genes in response to light. Participates in auxin efflux and thus regulates the polar auxin basipetal transport (from auxin-producing leaves to auxin-sensitive tissues, and from root tips to root elongating zone). Involved in diverse auxin-mediated responses including gravitropism, phototropism and lateral root formation. Required for the regulation of organ bending, such as gravitropic root bending. The sequence is that of ABC transporter B family member 19 from Arabidopsis thaliana (Mouse-ear cress).